Here is a 320-residue protein sequence, read N- to C-terminus: MKFFISFAFLCLVLSCVAALSPDQVESRLKSYVENRSFALLRSGRVARAGTNTVQCYDKYVPLIRQAAAEGKFASDKCAQEGQNAREEETKKSEVIRESLNVKVASIEKGLGACVAKYDVLEYFTCLRDHASESQTAAGEVGKTSAVIVEGLNIVLTNIELREKYCIDQAFEQAQEKSDILFTELENCLIEGLPEPEPEPEPEPEPEPEPEPEPEPEPEPEPEPEPEPEPEPEPEPEPEPEPEPEPEPEPEPEPEPEPEPEPEPEPEPEPEPEPEPEPEPEPEPEPEPEPEPEPEPEPEPEPEPEPQPEPESKPNSLFNF.

Positions 1–19 (MKFFISFAFLCLVLSCVAA) are cleaved as a signal peptide. The tract at residues 192–320 (GLPEPEPEPE…ESKPNSLFNF (129 aa)) is disordered. Acidic residues predominate over residues 194–308 (PEPEPEPEPE…EPEPEPEPQP (115 aa)). The tract at residues 194–311 (PEPEPEPEPE…PEPEPQPEPE (118 aa)) is 59 X 2 AA tandem repeats of P-E.

Expressed in the gut, but not salivary glands, of female and male flies (at protein level). Present in vesicles in midgut cells and in the lumen of the gut.

It localises to the secreted. In Glossina morsitans morsitans (Savannah tsetse fly), this protein is Protein TsetseEP.